Reading from the N-terminus, the 783-residue chain is Cation/H(+) antiporter 2 (783 aa).

Helical transmembrane passes span 19-39 (LNTMFIQMACILVFSQLFYLL), 43-63 (CGQAGPVAQILAGIVLSPVLL), 81-101 (YYSFFSFALRTSFMFLIGLEV), 121-141 (FVVSGLLSFASLMLFIPLFGI), 145-165 (YFTFFLVLLVTLSNTASPVVV), 186-206 (ALFIELTNVVLYTIIMAFISG), 208-228 (IILELFLFLLATVALILINMV), 242-262 (YLSKAETLVFFIFLLIIGITI), 300-320 (EFVLPVYFGYIGFRFSIIALT), 323-343 (FYLGIVIIVIVTIAGKFIGVI), 355-375 (YWLFLPTILSVKGHVGLLLLD), and 391-411 (MMVAALVITTLVSGVLASFLL).

Belongs to the monovalent cation:proton antiporter 2 (CPA2) transporter (TC 2.A.37) family. CHX (TC 2.A.37.4) subfamily. As to expression, specifically expressed in pollen.

It is found in the membrane. In terms of biological role, may operate as a cation/H(+) antiporter. The chain is Cation/H(+) antiporter 2 (CHX2) from Arabidopsis thaliana (Mouse-ear cress).